Consider the following 646-residue polypeptide: Rho guanine nucleotide exchange factor 7 (646 aa).

In terms of domain architecture, SH3 spans N6 to P65. Phosphoserine is present on residues S7, S71, and S79. Residues Y93–V273 enclose the DH domain. The PH domain maps to D295–K400. S340 carries the post-translational modification Phosphoserine. Disordered stretches follow at residues T402–E464 and K500–F520. Over residues P415–S428 the composition is skewed to polar residues. Residues K500–E512 show a composition bias toward basic residues. A phosphoserine mark is found at S516 and S560.

Interacts with SCRIB; interaction is direct and may play a role in regulation of apoptosis. Interacts with PAK kinases through the SH3 domain. Interacts with GIT1 and probably TGFB1I1. Interacts with ITCH and PARVB. Interacts with FRMPD4 (via N-terminus). Interacts with CaMK1. Interacts with PTK2/FAK1 and RAC1. Interacts with BIN2. Interacts with YWHAZ. Interacts (via PH domain) with NOX1 (via FAD-binding FR-type domain). Post-translationally, phosphorylated on Ser-516 by CaMK1; enhancement of GEF activity and downstream activation of RAC1. Phosphorylated by PTK2/FAK1; this promotes interaction with RAC1.

Its subcellular location is the cell junction. It localises to the focal adhesion. The protein resides in the cell projection. The protein localises to the ruffle. It is found in the cytoplasm. Its subcellular location is the cell cortex. It localises to the lamellipodium. Acts as a RAC1 guanine nucleotide exchange factor (GEF) and can induce membrane ruffling. Functions in cell migration, attachment and cell spreading. Promotes targeting of RAC1 to focal adhesions. May function as a positive regulator of apoptosis. Downstream of NMDA receptors and CaMKK-CaMK1 signaling cascade, promotes the formation of spines and synapses in hippocampal neurons. The sequence is that of Rho guanine nucleotide exchange factor 7 (Arhgef7) from Rattus norvegicus (Rat).